The chain runs to 424 residues: Glutamate-1-semialdehyde 2,1-aminomutase (424 aa).

Lysine 258 carries the post-translational modification N6-(pyridoxal phosphate)lysine.

It belongs to the class-III pyridoxal-phosphate-dependent aminotransferase family. HemL subfamily. It depends on pyridoxal 5'-phosphate as a cofactor.

The protein resides in the cytoplasm. It catalyses the reaction (S)-4-amino-5-oxopentanoate = 5-aminolevulinate. It functions in the pathway porphyrin-containing compound metabolism; protoporphyrin-IX biosynthesis; 5-aminolevulinate from L-glutamyl-tRNA(Glu): step 2/2. The sequence is that of Glutamate-1-semialdehyde 2,1-aminomutase from Pyrobaculum islandicum (strain DSM 4184 / JCM 9189 / GEO3).